The chain runs to 191 residues: Pyridoxal 5'-phosphate synthase subunit PdxT (191 aa).

48–50 (GES) contributes to the L-glutamine binding site. The Nucleophile role is filled by Cys79. L-glutamine-binding positions include Arg106 and 134–135 (IR). Active-site charge relay system residues include His170 and Glu172.

The protein belongs to the glutaminase PdxT/SNO family. In the presence of PdxS, forms a dodecamer of heterodimers. Only shows activity in the heterodimer.

The enzyme catalyses aldehydo-D-ribose 5-phosphate + D-glyceraldehyde 3-phosphate + L-glutamine = pyridoxal 5'-phosphate + L-glutamate + phosphate + 3 H2O + H(+). It carries out the reaction L-glutamine + H2O = L-glutamate + NH4(+). It functions in the pathway cofactor biosynthesis; pyridoxal 5'-phosphate biosynthesis. Functionally, catalyzes the hydrolysis of glutamine to glutamate and ammonia as part of the biosynthesis of pyridoxal 5'-phosphate. The resulting ammonia molecule is channeled to the active site of PdxS. The sequence is that of Pyridoxal 5'-phosphate synthase subunit PdxT from Oenococcus oeni (strain ATCC BAA-331 / PSU-1).